The following is a 485-amino-acid chain: Palmitoyltransferase ZDHHC1 (485 aa).

Residues 1-41 (MYKMNICNKPSNKTAPEKSVWTAPAQPSGPSPELQGQRSRR) form a disordered region. At 1-52 (MYKMNICNKPSNKTAPEKSVWTAPAQPSGPSPELQGQRSRRNGWSWPPHPLQ) the chain is on the cytoplasmic side. The tract at residues 1–271 (MYKMNICNKP…GHLLCFHIYL (271 aa)) is mediates interaction with STING1. The helical transmembrane segment at 53-73 (IVAWLLYLFFAVIGFGILVPL) threads the bilayer. At 74 to 77 (LPHH) the chain is on the lumenal side. Residues 78–98 (WVPAGYACMGAIFAGHLVVHL) form a helical membrane-spanning segment. Over 99–185 (TAVSIDPADA…YRLFLHSVAS (87 aa)) the chain is Cytoplasmic. Residues 134-184 (LHCNLCNVDVSARSKHCSACNKCVCGFDHHCKWLNNCVGERNYRLFLHSVA) enclose the DHHC domain. Catalysis depends on Cys-164, which acts as the S-palmitoyl cysteine intermediate. A helical transmembrane segment spans residues 186 to 206 (ALLGVLLLVLVATYVFVEFFV). At 207 to 241 (NPMRLRTNRHFEVLKNHTDVWFVFLPAAPVETQAP) the chain is on the lumenal side. Residues 242-262 (AILALAALLILLGLLSTALLG) traverse the membrane as a helical segment. The Cytoplasmic segment spans residues 263-485 (HLLCFHIYLM…RGRRVRPPFS (223 aa)). Disordered stretches follow at residues 324–358 (EPPG…GPPV) and 462–485 (LWPP…PPFS). Basic residues predominate over residues 475-485 (WRGRRVRPPFS).

It belongs to the DHHC palmitoyltransferase family. In terms of assembly, interacts with STING1; ZDHHC1 constitutively interacts with STING1 and in presence of DNA viruses activates it by promoting its cGAMP-induced oligomerization and the recruitment of downstream signaling components. Widely expressed with significant expression in heart, brain, placenta, lung, liver, kidney, testis, thymus and small intestine. Expressed at lower levels in adult pancreas and lung.

The protein localises to the endosome membrane. Its subcellular location is the endoplasmic reticulum membrane. It localises to the golgi apparatus. It carries out the reaction L-cysteinyl-[protein] + hexadecanoyl-CoA = S-hexadecanoyl-L-cysteinyl-[protein] + CoA. Palmitoyltransferase that catalyzes the addition of palmitate onto various protein substrates, such as NCDN and NLRP3. Has a palmitoyltransferase activity toward NCDN and regulates NCDN association with endosome membranes through this palmitoylation. Acts as an activator of the NLRP3 inflammasome by mediating palmitoylation of 'Cys-130' and 'Cys-958' of NLRP3, thereby promoting NLRP3 phosphorylation and activation by NEK7. Functionally, also has a palmitoyltransferase activity-independent function in DNA virus-triggered and CGAS-mediated innate immune response. Functions as an activator of STING1 by promoting its cGAMP-induced oligomerization and the recruitment of downstream signaling components. The protein is Palmitoyltransferase ZDHHC1 of Homo sapiens (Human).